A 420-amino-acid chain; its full sequence is ATP phosphoribosyltransferase regulatory subunit (420 aa).

This sequence belongs to the class-II aminoacyl-tRNA synthetase family. HisZ subfamily. Heteromultimer composed of HisG and HisZ subunits.

It is found in the cytoplasm. It participates in amino-acid biosynthesis; L-histidine biosynthesis; L-histidine from 5-phospho-alpha-D-ribose 1-diphosphate: step 1/9. In terms of biological role, required for the first step of histidine biosynthesis. May allow the feedback regulation of ATP phosphoribosyltransferase activity by histidine. The sequence is that of ATP phosphoribosyltransferase regulatory subunit from Bacillus anthracis (strain A0248).